Reading from the N-terminus, the 1431-residue chain is Caskin-1 (1431 aa).

ANK repeat units follow at residues 48–77, 81–110, 114–143, 147–176, 188–217, and 220–249; these read DGFS…AVDI, KGMR…AVNV, EGHI…NPCM, SGKT…CAAL, NGTS…DINR, and KSGT…NAQV. Tyr-253 bears the Phosphotyrosine mark. An SH3 domain is found at 281–347; it reads SAALQVRATK…PSSLGEAIVK (67 aa). A disordered region spans residues 348-372; it reads RAGSRTGSEPSPPQGGGSLGPSAPP. At Ser-358 the chain carries Phosphoserine. Residues 375 to 471 are CASK-binding; it reads IWVLRKPFAG…PKKLESASAS (97 aa). Residue Arg-398 is modified to Omega-N-methylarginine. Over residues 420–430 the composition is skewed to polar residues; sequence SQKSVSESSPG. A disordered region spans residues 420 to 471; it reads SQKSVSESSPGDSPVKPPEGSSGAARSQPPAAHAGQVYGEQPPKKLESASAS. Phosphoserine is present on residues Ser-423 and Ser-432. SAM domains lie at 476–539 and 545–609; these read KSAE…LNIP and HKPA…LAEL. Phosphoserine occurs at positions 637 and 650. Positions 669-679 are enriched in low complexity; the sequence is LSGPAEAGAAA. 2 disordered regions span residues 669 to 1000 and 1016 to 1041; these read LSGP…TGSA and GGGG…EPGR. The segment covering 692–712 has biased composition (polar residues); the sequence is RTTSRESSLSGRARHISSSQE. Phosphoserine is present on residues Ser-723 and Ser-728. Thr-741 carries the post-translational modification Phosphothreonine. A Phosphoserine modification is found at Ser-791. The segment covering 848-860 has biased composition (pro residues); the sequence is PPAPGPAPPPVPA. Phosphoserine occurs at positions 891, 893, and 989. Positions 1028–1037 are enriched in pro residues; it reads GHPTPRPASP. Thr-1067 carries the phosphothreonine modification. Ser-1069 is subject to Phosphoserine. Disordered stretches follow at residues 1072–1372 and 1389–1410; these read VTGL…RQKL and KIRQ…STGS. A compositionally biased stretch (basic and acidic residues) spans 1148–1160; that stretch reads DTVKRRPKAKEPD. A compositionally biased stretch (pro residues) spans 1191 to 1215; sequence PELPPPPPPAEPPPADLMQLPPLPL. Residues 1236-1247 show a composition bias toward polar residues; that stretch reads QPVSKIQGSPTP. Position 1259 is a phosphoserine (Ser-1259). The residue at position 1268 (Thr-1268) is a Phosphothreonine. Positions 1268–1283 are enriched in pro residues; the sequence is TPPPVSPKPPPPPTAP. Low complexity-rich tracts occupy residues 1284-1299, 1309-1327, and 1345-1359; these read KPAK…SATP, PPAA…SASP, and PRAA…PVAS. Ser-1363 carries the post-translational modification Phosphoserine. Residues 1389–1407 show a composition bias toward basic and acidic residues; the sequence is KIRQEDGQGPRPSSIEEKS.

As to quaternary structure, binds the CaM kinase domain of CASK. Forms a ternary complex with CASK and LIN7A, LIN7B or LIN7C. Competes with APBA1 that forms a similar complex with CASK and LIN7 proteins. The tripartite complex CASKIN1/CASK/LIN7(A/B/C) binds the cytoplasmic tail of NRXN1. Polymerizes, via the tandem SAM domains, to form long, 8 nM wide fibers, upon which other proteins can assemble.

It localises to the cytoplasm. Its function is as follows. May link the scaffolding protein CASK to downstream intracellular effectors. In Mus musculus (Mouse), this protein is Caskin-1 (Caskin1).